The sequence spans 566 residues: Chromatin assembly factor 1 subunit B (566 aa).

WD repeat units follow at residues 11–54, 64–103, 127–166, 169–208, 228–279, and 351–392; these read HNKE…DGKA, RHTKAVNVVRFSPSGEVLASGGDDAVILLWKLNDSKELEP, GHLEDVYDICWTSDGNYMASASVDNTAIMWDVVKGQKVSI, EHKSYVQGITWDPLGQYIATLSCDRVLRVYNTQTKRVAFN, FHDD…RPMG, and IHYH…IPLK. Disordered regions lie at residues 411–481 and 501–566; these read KSQP…NQPR and IPLK…KPNK. 2 stretches are compositionally biased toward polar residues: residues 425–437 and 469–478; these read TEGTSLSTPTLQP and QPASQSTKVN.

It belongs to the WD repeat HIR1 family. Interacts with CHAF1A.

It localises to the nucleus. Functionally, acts as a component of the histone chaperone complex chromatin assembly factor 1 (CAF-1), which assembles histone octamers onto DNA during replication and repair. CAF-1 performs the first step of the nucleosome assembly process, bringing newly synthesized histones H3 and H4 to replicating DNA; histones H2A/H2B can bind to this chromatin precursor subsequent to DNA replication to complete the histone octamer. In Gallus gallus (Chicken), this protein is Chromatin assembly factor 1 subunit B (CHAF1B).